The chain runs to 644 residues: N-acetylgalactosaminyltransferase 4 (644 aa).

Residues 1–13 (MAIKKRYVKRLLR) lie on the Cytoplasmic side of the membrane. A helical; Signal-anchor for type II membrane protein membrane pass occupies residues 14–34 (KVVLLLVVIVTVSLVTTLVVE). Topologically, residues 35–644 (RRMKNAAELT…MLDTFYDGLK (610 aa)) are lumenal. N-linked (GlcNAc...) asparagine glycosylation is found at N157 and N179. Residues 177–288 (LPNISVIFIF…YNWLPPLIEP (112 aa)) are catalytic subdomain A. Residues D218 and R249 each contribute to the substrate site. Residue D272 participates in Mn(2+) binding. S273 provides a ligand contact to substrate. Residue H274 participates in Mn(2+) binding. The segment at 345 to 407 (PYRSPVMMGG…PCSRVAHIFR (63 aa)) is catalytic subdomain B. W376 contacts substrate. H404 serves as a coordination point for Mn(2+). Residue R407 coordinates substrate. Positions 496-629 (AAGIIQNVAN…GNDRQRWEFG (134 aa)) constitute a Ricin B-type lectin domain. An intrachain disulfide couples C509 to C526. Residues N529 and N565 are each glycosylated (N-linked (GlcNAc...) asparagine). Cystine bridges form between C556/C573 and C600/C617. A glycan (N-linked (GlcNAc...) asparagine) is linked at N632.

It belongs to the glycosyltransferase 2 family. GalNAc-T subfamily. Mn(2+) serves as cofactor. Expressed in developing oocytes and egg chambers. During embryonic stages 9-11, expressed in the primordium of the foregut, midgut and hindgut. During embryonic stages 12-13, shows specific expression in the proventriculus that continues until the end of embryogenesis. In third instar larvae, ubiquitously expressed in wing, eye-antennal, leg and haltere imaginal disks.

It is found in the golgi apparatus membrane. The catalysed reaction is L-seryl-[protein] + UDP-N-acetyl-alpha-D-galactosamine = a 3-O-[N-acetyl-alpha-D-galactosaminyl]-L-seryl-[protein] + UDP + H(+). It catalyses the reaction L-threonyl-[protein] + UDP-N-acetyl-alpha-D-galactosamine = a 3-O-[N-acetyl-alpha-D-galactosaminyl]-L-threonyl-[protein] + UDP + H(+). It functions in the pathway protein modification; protein glycosylation. Its function is as follows. Glycopeptide transferase involved in O-linked oligosaccharide biosynthesis, which catalyzes the transfer of an N-acetyl-D-galactosamine residue to an already glycosylated peptide. In contrast to other proteins of the family, it does not act as a peptide transferase that transfers GalNAc onto serine or threonine residue on the protein receptor, but instead requires the prior addition of a GalNAc on a peptide before adding additional GalNAc moieties. Some peptide transferase activity is however not excluded, considering that its appropriate peptide substrate may remain unidentified. Prefers the diglycosylated Muc5AC-3/13 as substrate. The chain is N-acetylgalactosaminyltransferase 4 from Drosophila melanogaster (Fruit fly).